The sequence spans 273 residues: Putative peptidyl-prolyl cis-trans isomerase Cbf2 (273 aa).

Positions 1–21 are cleaved as a signal peptide; that stretch reads MKKFSLVAAALIAGVALNVNA. In terms of domain architecture, PpiC spans 131–228; sequence PARVQAKHIL…FGYHVILKEN (98 aa).

It catalyses the reaction [protein]-peptidylproline (omega=180) = [protein]-peptidylproline (omega=0). This Campylobacter jejuni subsp. jejuni serotype O:23/36 (strain 81-176) protein is Putative peptidyl-prolyl cis-trans isomerase Cbf2 (cbf2).